The following is a 129-amino-acid chain: MRKIYATGKRKTAIAKVWLTPGKGELSINEQSLNQWLGGHEAIKMKVMQPLLLTKQEQSVDIKAMVFGGGYSAQAEALRHGISKALNAYDIAFRAILKPKGLLTRDSRVVERKKYGKRKARRSPQFSKR.

Belongs to the universal ribosomal protein uS9 family.

This chain is Small ribosomal subunit protein uS9, found in Helicobacter pylori (strain P12).